Here is a 423-residue protein sequence, read N- to C-terminus: Mannan endo-1,4-beta-mannosidase (423 aa).

A signal peptide spans 1 to 27 (MKTITTARLPWAAQSFALGICLIALLG). One can recognise a GH26 domain in the interval 56–409 (METRSLFAFM…YADEFTAFNR (354 aa)). Residues E121, H143, and W162 each contribute to the substrate site. The active-site Proton donor is E212. Residues W217 and Y285 each coordinate substrate. The Nucleophile role is filled by E320. Substrate-binding positions include 360–361 (WR) and H377.

Belongs to the glycosyl hydrolase 26 family. As to quaternary structure, homodimer.

The catalysed reaction is Random hydrolysis of (1-&gt;4)-beta-D-mannosidic linkages in mannans, galactomannans and glucomannans.. In terms of biological role, catalyzes the endo hydrolysis of beta-1,4-linked mannan and galactomannan, but displays little activity towards other polysaccharides located in the plant cell wall. Preferentially hydrolyzes the larger oligosaccharides and has greater activity against non-substituted polysaccharides. It displays tight specificity for mannose at both the -2 and the -1 subsites. Appears to act in synergy with alpha-galactosidase (AgaA) to elicit hydrolysis of galactomannan. This is Mannan endo-1,4-beta-mannosidase from Cellvibrio japonicus (strain Ueda107) (Pseudomonas fluorescens subsp. cellulosa).